The following is a 352-amino-acid chain: Nicotinate-nucleotide--dimethylbenzimidazole phosphoribosyltransferase (352 aa).

Glu-316 serves as the catalytic Proton acceptor.

The protein belongs to the CobT family.

The catalysed reaction is 5,6-dimethylbenzimidazole + nicotinate beta-D-ribonucleotide = alpha-ribazole 5'-phosphate + nicotinate + H(+). It functions in the pathway nucleoside biosynthesis; alpha-ribazole biosynthesis; alpha-ribazole from 5,6-dimethylbenzimidazole: step 1/2. Its function is as follows. Catalyzes the synthesis of alpha-ribazole-5'-phosphate from nicotinate mononucleotide (NAMN) and 5,6-dimethylbenzimidazole (DMB). The protein is Nicotinate-nucleotide--dimethylbenzimidazole phosphoribosyltransferase of Yersinia enterocolitica serotype O:8 / biotype 1B (strain NCTC 13174 / 8081).